We begin with the raw amino-acid sequence, 128 residues long: UPF0102 protein Acry_2261 (128 aa).

This sequence belongs to the UPF0102 family.

This is UPF0102 protein Acry_2261 from Acidiphilium cryptum (strain JF-5).